Here is a 48-residue protein sequence, read N- to C-terminus: Delta-actitoxin-Bcg1c (48 aa).

Intrachain disulfides connect cysteine 4-cysteine 45, cysteine 6-cysteine 35, and cysteine 28-cysteine 46.

It localises to the secreted. It is found in the nematocyst. Its function is as follows. Binds specifically to voltage-gated sodium channels SCN1A/Nav1.1, thereby delaying their inactivation during signal transduction. The chain is Delta-actitoxin-Bcg1c from Bunodosoma cangicum (Sea anemone).